The following is a 305-amino-acid chain: MTAHLSYVEAVVVGAFQGVTELFPVSSLGHAVLVPALVGGRWAQDLSVSAHRSPYLAFIVGLHVATAAALLVFFWRDWVRILAGFFSSLRHRRIRTPDERLAWLIVVGTIPVGLAGLALEQLFRTTLGKPVPAAAFLLLNGVALYAGEVLRRRVAPVADEPAVPDAEQQHGDEASDNRLAQLPLRRGVLIGAAQILALLPGISRSGITIVAGLWRGLSHEDAARFSFLLATPIILAAGVYKIPELFGPLGAGIGGQVLAGSIASFVCAYLAVRYLTRYFQTRTLTPFAIYCAVAGGASLVWLALR.

8 helical membrane-spanning segments follow: residues 18–38, 55–75, 103–123, 130–150, 187–207, 225–245, 246–266, and 284–304; these read GVTE…PALV, YLAF…VFFW, WLIV…EQLF, PVPA…GEVL, GVLI…RSGI, FSFL…IPEL, FGPL…ASFV, and LTPF…WLAL.

The protein belongs to the UppP family.

The protein resides in the cell membrane. The enzyme catalyses di-trans,octa-cis-undecaprenyl diphosphate + H2O = di-trans,octa-cis-undecaprenyl phosphate + phosphate + H(+). Catalyzes the dephosphorylation of undecaprenyl diphosphate (UPP). Confers resistance to bacitracin. In Mycolicibacterium paratuberculosis (strain ATCC BAA-968 / K-10) (Mycobacterium paratuberculosis), this protein is Undecaprenyl-diphosphatase.